We begin with the raw amino-acid sequence, 142 residues long: Transcription antitermination protein NusB (142 aa).

It belongs to the NusB family.

Functionally, involved in transcription antitermination. Required for transcription of ribosomal RNA (rRNA) genes. Binds specifically to the boxA antiterminator sequence of the ribosomal RNA (rrn) operons. This Latilactobacillus sakei subsp. sakei (strain 23K) (Lactobacillus sakei subsp. sakei) protein is Transcription antitermination protein NusB.